Reading from the N-terminus, the 239-residue chain is Uridylate kinase (239 aa).

10–13 (KFSG) is a binding site for ATP. The involved in allosteric activation by GTP stretch occupies residues 18–23 (GENGFG). Residue glycine 52 participates in UMP binding. ATP is bound by residues glycine 53 and arginine 57. UMP-binding positions include aspartate 73 and 134–141 (TGNPYFTT). ATP-binding residues include threonine 161, tyrosine 167, and aspartate 170.

This sequence belongs to the UMP kinase family. In terms of assembly, homohexamer.

The protein localises to the cytoplasm. The enzyme catalyses UMP + ATP = UDP + ADP. The protein operates within pyrimidine metabolism; CTP biosynthesis via de novo pathway; UDP from UMP (UMPK route): step 1/1. Its activity is regulated as follows. Allosterically activated by GTP. Inhibited by UTP. In terms of biological role, catalyzes the reversible phosphorylation of UMP to UDP. In Campylobacter jejuni subsp. jejuni serotype O:6 (strain 81116 / NCTC 11828), this protein is Uridylate kinase.